A 279-amino-acid chain; its full sequence is 3-methyl-2-oxobutanoate hydroxymethyltransferase (279 aa).

2 residues coordinate Mg(2+): Asp43 and Asp82. Residues 43-44 (DS), Asp82, and Lys112 contribute to the 3-methyl-2-oxobutanoate site. Glu114 is a Mg(2+) binding site. Glu181 acts as the Proton acceptor in catalysis.

It belongs to the PanB family. Homodecamer; pentamer of dimers. The cofactor is Mg(2+).

It is found in the cytoplasm. The enzyme catalyses 3-methyl-2-oxobutanoate + (6R)-5,10-methylene-5,6,7,8-tetrahydrofolate + H2O = 2-dehydropantoate + (6S)-5,6,7,8-tetrahydrofolate. It participates in cofactor biosynthesis; (R)-pantothenate biosynthesis; (R)-pantoate from 3-methyl-2-oxobutanoate: step 1/2. Its function is as follows. Catalyzes the reversible reaction in which hydroxymethyl group from 5,10-methylenetetrahydrofolate is transferred onto alpha-ketoisovalerate to form ketopantoate. The protein is 3-methyl-2-oxobutanoate hydroxymethyltransferase of Geobacillus sp. (strain WCH70).